The primary structure comprises 500 residues: MTEQVQDENKLIAERRAKLDSIRPNCSANAHPNTFRRTHKAAELQEKYGQNTKEELEALGFRTSIAGRIMAKRGPFLVIQDVSGRIQAYAEKGVQADLKDRYQGLDIGDIIGVTGQLHLSGKGDLYVNMEEYQLLTKALRPLPEKFHGLTDQETRYRQRYVDLIVNEESRQAFVMRSKVVAAIRNFMIKKEFMEVETPMMHVIPGGASARPFITHHNALDMPMYLRIAPELYLKRLVVGGFERVFEINRNFRNEGLSPRHNPEFTMMEFYMAYADYQDLMDLTEELLSSIAIELLGSAQMPYGEHTVDFGGPYARLSMLEAIQKYNPDNATIQAMTYEQVKDLEFMRELAISLGIKIEKFWTCGQLLEEIFGETAEWQLMQPTFITGYPADISPLARRNDDNHFITDRFEFFIGGREVANGFSELNDAQDQDSRFKAQVDAKDAGDDEAMFYDADYITALEHGLPPTAGQGIGIDRLVMLFTNTHTIRDVILFPAMRPQA.

Glu410 and Glu417 together coordinate Mg(2+).

This sequence belongs to the class-II aminoacyl-tRNA synthetase family. As to quaternary structure, homodimer. It depends on Mg(2+) as a cofactor.

Its subcellular location is the cytoplasm. It carries out the reaction tRNA(Lys) + L-lysine + ATP = L-lysyl-tRNA(Lys) + AMP + diphosphate. The chain is Lysine--tRNA ligase from Shewanella oneidensis (strain ATCC 700550 / JCM 31522 / CIP 106686 / LMG 19005 / NCIMB 14063 / MR-1).